The primary structure comprises 89 residues: Small ribosomal subunit protein uS19 (89 aa).

This sequence belongs to the universal ribosomal protein uS19 family.

Protein S19 forms a complex with S13 that binds strongly to the 16S ribosomal RNA. This chain is Small ribosomal subunit protein uS19, found in Xanthomonas campestris pv. campestris (strain 8004).